Here is a 1025-residue protein sequence, read N- to C-terminus: Multidrug resistance protein MdtC (1025 aa).

At Met-1–Leu-6 the chain is on the cytoplasmic side. Residues Phe-7–Phe-29 form a helical membrane-spanning segment. Residues Arg-30–Glu-335 are Periplasmic-facing. Residues Gln-336–Leu-353 traverse the membrane as a helical segment. The Cytoplasmic portion of the chain corresponds to Arg-354–Thr-359. The chain crosses the membrane as a helical span at residues Ile-360–Leu-379. Topologically, residues Cys-380–Ser-388 are periplasmic. A helical membrane pass occupies residues Leu-389–Ala-411. Residues Arg-412–Glu-430 lie on the Cytoplasmic side of the membrane. A helical membrane pass occupies residues Val-431 to Gly-453. The Periplasmic portion of the chain corresponds to Gly-454–Leu-467. Residues Ser-468–Leu-490 form a helical membrane-spanning segment. At Lys-491 to Gln-852 the chain is on the cytoplasmic side. Residues Val-853 to Val-875 form a helical membrane-spanning segment. Over His-876–Ala-894 the chain is Periplasmic. Residues Leu-895–Val-917 form a helical membrane-spanning segment. At Lys-918–Cys-947 the chain is on the cytoplasmic side. The helical transmembrane segment at Leu-948–Leu-970 threads the bilayer. The Periplasmic portion of the chain corresponds to Ser-971–Ile-984. A helical transmembrane segment spans residues Thr-985–Phe-1007. Residues Phe-1008–Glu-1025 are Cytoplasmic-facing.

The protein belongs to the resistance-nodulation-cell division (RND) (TC 2.A.6) family. MdtC subfamily. In terms of assembly, part of a tripartite efflux system composed of MdtA, MdtB and MdtC. MdtC forms a heteromultimer with MdtB.

Its subcellular location is the cell inner membrane. The MdtABC tripartite complex confers resistance against novobiocin and deoxycholate. This Escherichia coli O6:H1 (strain CFT073 / ATCC 700928 / UPEC) protein is Multidrug resistance protein MdtC.